A 321-amino-acid chain; its full sequence is Ferrochelatase (321 aa).

Fe cation contacts are provided by H194 and E275.

The protein belongs to the ferrochelatase family.

It localises to the cytoplasm. The enzyme catalyses heme b + 2 H(+) = protoporphyrin IX + Fe(2+). Its pathway is porphyrin-containing compound metabolism; protoheme biosynthesis; protoheme from protoporphyrin-IX: step 1/1. Catalyzes the ferrous insertion into protoporphyrin IX. In Wigglesworthia glossinidia brevipalpis, this protein is Ferrochelatase.